The following is a 618-amino-acid chain: Prothrombin (618 aa).

The first 24 residues, 1 to 24, serve as a signal peptide directing secretion; sequence MSHVRGLGLPGCLALAALVSLVHS. Residues 25 to 43 constitute a propeptide that is removed on maturation; sequence QHVFLAPQQALSLLQRVRR. One can recognise a Gla domain in the interval 44–90; the sequence is ANSGFLEELRKGNLERECVEEQCSYEEAFEALESPQDTDVFWAKYTV. E50, E51, E58, E60, E63, E64, E69, E70, E73, and E76 each carry 4-carboxyglutamate. A disulfide bridge connects residues C61 and C66. Intrachain disulfides connect C91-C104, C109-C187, C130-C170, C158-C182, C215-C293, C236-C276, C264-C288, C333-C479, C388-C404, and C533-C547. Kringle domains lie at 109–187 and 215–292; these read CAMD…VPVC and CLTE…NLNY. N122 and N144 each carry an N-linked (GlcNAc...) asparagine glycan. Positions 361 to 615 constitute a Peptidase S1 domain; sequence IVEGWDAEKG…LKRWIQKVID (255 aa). H403 acts as the Charge relay system in catalysis. A glycan (N-linked (GlcNAc...) asparagine) is linked at N413. Residue D459 is the Charge relay system of the active site. Residues 548–570 are high affinity receptor-binding region which is also known as the TP508 peptide; the sequence is AGFKVNDTKRGDACEGDSGGPFV. N-linked (GlcNAc...) asparagine glycosylation occurs at N553. A disulfide bridge links C561 with C591. The Charge relay system role is filled by S565.

Belongs to the peptidase S1 family. As to quaternary structure, heterodimer (named alpha-thrombin) of a light and a heavy chain; disulfide-linked. Forms a heterodimer with SERPINA5. In plasma, interacts (via N-terminus) with alpha-1-microglobulin; this interaction does not prevent the activation of prothrombin to thrombin. In terms of processing, the gamma-carboxyglutamyl residues, which bind calcium ions, result from the carboxylation of glutamyl residues by a microsomal enzyme, the vitamin K-dependent carboxylase. The modified residues are necessary for the calcium-dependent interaction with a negatively charged phospholipid surface, which is essential for the conversion of prothrombin to thrombin. Post-translationally, in the penultimate step of the coagulation cascade, prothrombin is converted to thrombin by the prothrombinase complex composed of factor Xa (F10), cofactor Va (F5), and phospholipids. This activation requires factor Xa-catalyzed sequential cleavage at 2 sites, Arg-311 and Arg-360, along 2 possible pathways. In the first pathway, the first cleavage occurs at Arg-311, leading to the formation of the inactive intermediate prethrombin-2. This pathway preferentially occurs on platelets and in the absence of cofactor Va. In the second pathway, the first cleavage occurs at Arg-360, which separates protease domain into 2 chains that remain connected through a disulfide bond and generates the active intermediate meizothrombin. The presence of cofactor Va directs activation along the meizothrombin pathway and greatly accelerates the rate of cleavage at Arg-360, but has a smaller effect on the cleavage of meizothrombin at Arg-311. Meizothrombin accumulates as an intermediate when prothrombinase is assembled on the membrane of red blood cells.

It catalyses the reaction Selective cleavage of Arg-|-Gly bonds in fibrinogen to form fibrin and release fibrinopeptides A and B.. With respect to regulation, activity is promoted in the presence of negatively charged surfaces, such as polyphosphate and dextran sulfate. Inhibited by SERPINA5. In terms of biological role, thrombin, which cleaves bonds after Arg and Lys, converts fibrinogen to fibrin and activates factors V, VII, VIII, XIII, and, in complex with thrombomodulin, protein C. Functions in blood homeostasis, inflammation and wound healing. Activates coagulation factor XI (F11); activation is promoted by the contact with negatively charged surfaces. Triggers the production of pro-inflammatory cytokines, such as MCP-1/CCL2 and IL8/CXCL8, in endothelial cells. This is Prothrombin (F2) from Mus musculus (Mouse).